A 447-amino-acid polypeptide reads, in one-letter code: NADP-specific glutamate dehydrogenase (447 aa).

Positions 92, 113, and 116 each coordinate substrate. Residue K128 is the Proton donor of the active site. Position 167 (G167) interacts with substrate. NADP(+)-binding residues include T211 and N242. Residue S380 participates in substrate binding.

Belongs to the Glu/Leu/Phe/Val dehydrogenases family. In terms of assembly, homohexamer.

It carries out the reaction L-glutamate + NADP(+) + H2O = 2-oxoglutarate + NH4(+) + NADPH + H(+). Catalyzes the reversible oxidative deamination of glutamate to alpha-ketoglutarate and ammonia. This Salmonella typhimurium (strain LT2 / SGSC1412 / ATCC 700720) protein is NADP-specific glutamate dehydrogenase (gdhA).